The sequence spans 209 residues: Thymidine kinase (209 aa).

ATP contacts are provided by residues 9-16 and 88-91; these read AAMNAGKS and DEAQ. Catalysis depends on Glu-89, which acts as the Proton acceptor. The Zn(2+) site is built by Cys-146, Cys-148, Cys-183, and His-186.

Belongs to the thymidine kinase family. In terms of assembly, homotetramer.

The protein resides in the cytoplasm. The enzyme catalyses thymidine + ATP = dTMP + ADP + H(+). This chain is Thymidine kinase, found in Legionella pneumophila (strain Lens).